The sequence spans 273 residues: HMP-PP phosphatase (273 aa).

Residue D8 is the Nucleophile of the active site. Mg(2+) contacts are provided by D8, D10, and D212.

Belongs to the HAD-like hydrolase superfamily. Cof family. It depends on Mg(2+) as a cofactor.

The catalysed reaction is 4-amino-2-methyl-5-(diphosphooxymethyl)pyrimidine + H2O = 4-amino-2-methyl-5-(phosphooxymethyl)pyrimidine + phosphate + H(+). Functionally, catalyzes the hydrolysis of 4-amino-2-methyl-5-hydroxymethylpyrimidine pyrophosphate (HMP-PP) to 4-amino-2-methyl-5-hydroxymethylpyrimidine phosphate (HMP-P). This Yersinia pseudotuberculosis serotype O:1b (strain IP 31758) protein is HMP-PP phosphatase.